Reading from the N-terminus, the 1210-residue chain is Epidermal growth factor receptor (1210 aa).

Residues 1–24 form the signal peptide; sequence MRPSGTARTTLLVLLTALCAAGGA. Residues 25 to 647 lie on the Extracellular side of the membrane; that stretch reads LEEKKVCQGT…VWPSGPKIPS (623 aa). C31 and C58 are joined by a disulfide. One copy of the Approximate repeat lies at 75–300; that stretch reads DLSFLKTIQE…CVKKCPRNYV (226 aa). 3 N-linked (GlcNAc...) asparagine glycosylation sites follow: N128, N175, and N196. 13 disulfide bridges follow: C157/C187, C190/C199, C194/C207, C215/C223, C219/C231, C232/C240, C236/C248, C251/C260, C264/C291, C295/C307, C311/C326, C329/C333, and C337/C362. The residue at position 229 (S229) is a Phosphoserine. N-linked (GlcNAc...) asparagine glycans are attached at residues N352, N413, and N444. The stretch at 390–600 is one Approximate repeat; sequence RELEILKTVK…CVKTCPAGIM (211 aa). Cystine bridges form between C470-C499, C506-C515, C510-C523, C526-C535, C539-C555, C558-C571, C562-C579, C582-C591, C595-C617, C620-C628, and C624-C636. Residue N528 is glycosylated (N-linked (GlcNAc...) asparagine). N-linked (GlcNAc...) asparagine glycosylation is present at N568. N603 and N623 each carry an N-linked (GlcNAc...) asparagine glycan. A helical transmembrane segment spans residues 648 to 670; it reads IATGIVGGLLFIVVVALGIGLFM. Topologically, residues 671-1210 are cytoplasmic; sequence RRRHIVRKRT…APPSSEFIGA (540 aa). T680 carries the post-translational modification Phosphothreonine; by PKC and PKD/PRKD1. Residues 690–706 are important for dimerization, phosphorylation and activation; the sequence is LVEPLTPSGEAPNQAHL. The residue at position 695 (T695) is a Phosphothreonine; by PKD/PRKD1. S697 carries the post-translational modification Phosphoserine. A Protein kinase domain is found at 714 to 981; it reads FKKIKVLGSG…KMARDPQRYL (268 aa). A Glycyl lysine isopeptide (Lys-Gly) (interchain with G-Cter in ubiquitin) cross-link involves residue K718. 720–728 contacts ATP; that stretch reads LGSGAFGTV. K739 is covalently cross-linked (Glycyl lysine isopeptide (Lys-Gly) (interchain with G-Cter in ubiquitin)). ATP is bound at residue K747. K747 is subject to N6-(2-hydroxyisobutyryl)lysine. Glycyl lysine isopeptide (Lys-Gly) (interchain with G-Cter in ubiquitin) cross-links involve residues K756 and K759. An ATP-binding site is contributed by 792–793; that stretch reads TQ. The Proton acceptor role is filled by D839. D857 lines the ATP pocket. Residue K869 forms a Glycyl lysine isopeptide (Lys-Gly) (interchain with G-Cter in ubiquitin) linkage. Y871 bears the Phosphotyrosine mark. Glycyl lysine isopeptide (Lys-Gly) (interchain with G-Cter in ubiquitin) cross-links involve residues K931, K962, and K972. A phosphoserine mark is found at S993 and S997. Residues Y1000 and Y1018 each carry the phosphotyrosine; by autocatalysis modification. 2 positions are modified to phosphoserine: S1028 and S1041. Position 1043 is a phosphothreonine (T1043). The residue at position 1044 (S1044) is a Phosphoserine. The S-palmitoyl cysteine moiety is linked to residue C1051. Y1069 bears the Phosphotyrosine mark. Phosphoserine occurs at positions 1070 and 1071. Residues Y1092 and Y1110 each carry the phosphotyrosine; by autocatalysis modification. The segment at 1113 to 1137 is disordered; the sequence is QPLHPAPGRDLHYQNPHSNAVGNPE. The segment covering 1127–1137 has biased composition (polar residues); the sequence is NPHSNAVGNPE. C1146 carries S-palmitoyl cysteine lipidation. At S1166 the chain carries Phosphoserine. At Y1172 the chain carries Phosphotyrosine; by autocatalysis. Position 1197 is a phosphotyrosine (Y1197). R1199 carries the post-translational modification Omega-N-methylarginine.

This sequence belongs to the protein kinase superfamily. Tyr protein kinase family. EGF receptor subfamily. Binding of the ligand triggers homo- and/or heterodimerization of the receptor triggering its autophosphorylation. Heterodimer with ERBB2. Forms a complex with CCDC88A/GIV (via SH2-like region) and GNAI3 which leads to enhanced EGFR signaling and triggering of cell migration; binding of CCDC88A requires autophosphorylation of the EGFR C-terminal region, and ligand stimulation is required for recruitment of GNAI3 to the complex. Interacts with ERRFI1; inhibits dimerization of the kinase domain and autophosphorylation. Part of a complex with ERBB2 and either PIK3C2A or PIK3C2B. Interacts with GRB2; an adapter protein coupling the receptor to downstream signaling pathways. Interacts with GAB2; involved in signaling downstream of EGFR. Interacts with STAT3; mediates EGFR downstream signaling in cell proliferation. Interacts with RIPK1; involved in NF-kappa-B activation. Interacts (autophosphorylated) with CBL, CBLB and CBLC; involved in EGFR ubiquitination and regulation; interaction with CBL is reduced in the presence of tensin TNS4. Interacts with SOCS5; regulates EGFR degradation through ELOC- and ELOB-mediated ubiquitination and proteasomal degradation. Interacts with PRMT5; methylates EGFR and enhances interaction with PTPN6. Interacts (phosphorylated) with PTPN6; inhibits EGFR-dependent activation of MAPK/ERK. Interacts with COPG1; essential for regulation of EGF-dependent nuclear transport of EGFR by retrograde trafficking from the Golgi to the ER. Interacts with TNK2; this interaction is dependent on EGF stimulation and kinase activity of EGFR. Interacts with PCNA; positively regulates PCNA. Interacts with PELP1. Interacts with MUC1. Interacts with AP2M1. Interacts with FER. Interacts (via SH2 domains) with GRB2, NCK1 and NCK2. Interacts with EPS8; mediates EPS8 phosphorylation. Interacts with ATXN2. Interacts with GAREM1. Interacts (ubiquitinated) with ANKRD13A/B/D; the interaction is direct and may regulate EGFR internalization after EGF stimulation. Interacts with GPER1; the interaction occurs in an estrogen-dependent manner. Interacts (via C-terminal cytoplasmic kinase domain) with ZPR1 (via zinc fingers). Interacts with RNF115 and RNF126. Interacts with GPRC5A (via its transmembrane domain). Interacts with FAM83B; positively regulates EGFR inducing its autophosphorylation in absence of stimulation by EGF. Interacts with LAPTM4B; positively correlates with EGFR activation. Interacts with STX19. Interacts with CD44. Interacts with PGRMC1; the interaction requires PGRMC1 homodimerization. Interacts with PIKFYVE. Interacts with NEU3. Interacts with TRAF4. Interacts with the ant venom OMEGA-myrmeciitoxin(02)-Mg1a. Interacts with CD82; this interaction facilitates ligand-induced endocytosis of the receptor and its subsequent desensitization. Monoubiquitinated and polyubiquitinated upon EGF stimulation; which does not affect tyrosine kinase activity or signaling capacity but may play a role in lysosomal targeting. Polyubiquitin linkage is mainly through 'Lys-63', but linkage through 'Lys-48', 'Lys-11' and 'Lys-29' also occurs. Deubiquitinated by OTUD7B, preventing degradation. Ubiquitinated by RNF115 and RNF126. Ubiquitinated by ZNRF1 or CBL at different lysines in response to EGF stimulation; leading to recruitment of the ESCRT machinery and subsequent degradation in the lysosomes. Deubiquitinated by UCHL1 leading to the inhibition of its degradation. Post-translationally, phosphorylated on Tyr residues in response to EGF. Phosphorylation at Ser-697 is partial and occurs only if Thr-695 is phosphorylated. Phosphorylation at Thr-680 and Thr-695 by PRKD1 inhibits EGF-induced MAPK8/JNK1 activation. Dephosphorylation by PTPRJ prevents endocytosis and stabilizes the receptor at the plasma membrane. Autophosphorylation at Tyr-1199 is stimulated by methylation at Arg-1199 and enhances interaction with PTPN6. Autophosphorylation at Tyr-1092 and/or Tyr-1110 recruits STAT3. Dephosphorylated by PTPN1 and PTPN2. In terms of processing, palmitoylated on Cys residues by ZDHHC20. Palmitoylation inhibits internalization after ligand binding, and increases the persistence of tyrosine-phosphorylated EGFR at the cell membrane. Palmitoylation increases the amplitude and duration of EGFR signaling. Methylated. Methylation at Arg-1199 by PRMT5 stimulates phosphorylation at Tyr-1197.

The protein localises to the cell membrane. The protein resides in the endoplasmic reticulum membrane. It localises to the golgi apparatus membrane. Its subcellular location is the nucleus membrane. It is found in the endosome. The protein localises to the endosome membrane. The protein resides in the nucleus. The enzyme catalyses L-tyrosyl-[protein] + ATP = O-phospho-L-tyrosyl-[protein] + ADP + H(+). Endocytosis and inhibition of the activated EGFR by phosphatases like PTPRJ and PTPRK constitute immediate regulatory mechanisms. Upon EGF-binding phosphorylates EPS15 that regulates EGFR endocytosis and activity. Moreover, inducible feedback inhibitors including LRIG1, SOCS4, SOCS5 and ERRFI1 constitute alternative regulatory mechanisms for the EGFR signaling. Its function is as follows. Receptor tyrosine kinase binding ligands of the EGF family and activating several signaling cascades to convert extracellular cues into appropriate cellular responses. Known ligands include EGF, TGFA/TGF-alpha, AREG, epigen/EPGN, BTC/betacellulin, epiregulin/EREG and HBEGF/heparin-binding EGF. Ligand binding triggers receptor homo- and/or heterodimerization and autophosphorylation on key cytoplasmic residues. The phosphorylated receptor recruits adapter proteins like GRB2 which in turn activates complex downstream signaling cascades. Activates at least 4 major downstream signaling cascades including the RAS-RAF-MEK-ERK, PI3 kinase-AKT, PLCgamma-PKC and STATs modules. May also activate the NF-kappa-B signaling cascade. Also directly phosphorylates other proteins like RGS16, activating its GTPase activity and probably coupling the EGF receptor signaling to the G protein-coupled receptor signaling. Also phosphorylates MUC1 and increases its interaction with SRC and CTNNB1/beta-catenin. Positively regulates cell migration via interaction with CCDC88A/GIV which retains EGFR at the cell membrane following ligand stimulation, promoting EGFR signaling which triggers cell migration. Plays a role in enhancing learning and memory performance. Plays a role in mammalian pain signaling (long-lasting hypersensitivity). The polypeptide is Epidermal growth factor receptor (Mus musculus (Mouse)).